The following is a 141-amino-acid chain: Hemoglobin subunit alpha (141 aa).

The Globin domain occupies 1 to 141 (VLSSKDKANV…VSTVLTSKYR (141 aa)). A Phosphoserine modification is found at Ser3. An N6-succinyllysine mark is found at Lys7 and Lys11. An N6-acetyllysine; alternate modification is found at Lys16. Lys16 carries the post-translational modification N6-succinyllysine; alternate. Residue Tyr24 is modified to Phosphotyrosine. Lys40 carries the post-translational modification N6-succinyllysine. Ser49 bears the Phosphoserine mark. His58 provides a ligand contact to O2. His87 lines the heme b pocket. Position 102 is a phosphoserine (Ser102). Residue Thr108 is modified to Phosphothreonine. A Phosphoserine modification is found at Ser124. Thr134 and Thr137 each carry phosphothreonine. Phosphoserine is present on Ser138.

Belongs to the globin family. Heterotetramer of two alpha chains and two beta chains. As to expression, red blood cells.

Functionally, involved in oxygen transport from the lung to the various peripheral tissues. In terms of biological role, hemopressin acts as an antagonist peptide of the cannabinoid receptor CNR1. Hemopressin-binding efficiently blocks cannabinoid receptor CNR1 and subsequent signaling. The polypeptide is Hemoglobin subunit alpha (HBA) (Lama vicugna (Vicugna)).